The primary structure comprises 359 residues: sn-1 acyl-lipid omega-3 desaturase (ferredoxin) (359 aa).

Positions 1 to 15 are enriched in polar residues; it reads MQLDTISFNNPLNSE. Positions 1 to 20 are disordered; it reads MQLDTISFNNPLNSETSEDT. A run of 2 helical transmembrane segments spans residues 47–67 and 70–90; these read LFYFFRDILIIGLLYAVASYL and WLFFPIFWLMQGTMFWALFVV. Positions 92 to 96 match the Histidine box-1 motif; sequence HDCGH. The Histidine box-2 signature appears at 128–132; the sequence is HRTHH. 2 helical membrane passes run 207–227 and 228–248; these read VLLIGMVGLLGFLTYQWGWMW and LLKYYAVPYLVFIVWLDLVTF. The Histidine box-3 motif lies at 294–298; sequence HHIFL.

This sequence belongs to the fatty acid desaturase type 2 family. It depends on Fe(2+) as a cofactor.

The protein localises to the membrane. The enzyme catalyses a 1-[(9Z,12Z)-octadecdienoyl]-2-acyl-glycerolipid + 2 reduced [2Fe-2S]-[ferredoxin] + O2 + 2 H(+) = a 1-[(9Z,12Z,15Z)-octadectrienoyl]-2-acyl-glycerolipid + 2 oxidized [2Fe-2S]-[ferredoxin] + 2 H2O. It carries out the reaction a 1-[(6Z,9Z,12Z)-octadectrienoyl]-2-acyl-glycerolipid + 2 reduced [2Fe-2S]-[ferredoxin] + O2 + 2 H(+) = a 1-[(6Z,9Z,12Z,15Z)-octadectetraenoyl]-2-acyl-glycerolipid + 2 oxidized [2Fe-2S]-[ferredoxin] + 2 H2O. It participates in lipid metabolism; polyunsaturated fatty acid biosynthesis. Desaturase involved in fatty acid biosynthesis. Introduces a double bond at carbon 15 of linoleoyl and gamma-linolenoyl groups attached to the sn-1 position of the glycerol moiety of membrane glycerolipids. The sequence is that of sn-1 acyl-lipid omega-3 desaturase (ferredoxin) from Nostoc sp. (strain 36).